The sequence spans 434 residues: Enolase (434 aa).

Residues His158 and Glu167 each coordinate substrate. Glu210 (proton donor) is an active-site residue. Mg(2+) contacts are provided by Asp245, Glu294, and Asp319. Substrate is bound by residues Glu294 and Asp319. The active-site Proton acceptor is the Lys344. Substrate is bound by residues 371 to 374 and Lys395; that span reads SHRS.

Belongs to the enolase family. As to quaternary structure, homodimer. Mg(2+) is required as a cofactor.

The protein localises to the cytoplasm. The enzyme catalyses (2R)-2-phosphoglycerate = phosphoenolpyruvate + H2O. The protein operates within carbohydrate degradation; glycolysis; pyruvate from D-glyceraldehyde 3-phosphate: step 4/5. The protein is Enolase (ENO) of Schistosoma japonicum (Blood fluke).